A 422-amino-acid polypeptide reads, in one-letter code: Probable protein phosphatase 2C 43 (422 aa).

The PPM-type phosphatase domain occupies 117-393 (SSGSYADKGD…DNVTVVVICF (277 aa)). Residues Asp163, Gly164, Asp341, and Asp384 each coordinate Mn(2+).

The protein belongs to the PP2C family. The cofactor is Mg(2+). Mn(2+) is required as a cofactor.

The catalysed reaction is O-phospho-L-seryl-[protein] + H2O = L-seryl-[protein] + phosphate. The enzyme catalyses O-phospho-L-threonyl-[protein] + H2O = L-threonyl-[protein] + phosphate. The polypeptide is Probable protein phosphatase 2C 43 (Arabidopsis thaliana (Mouse-ear cress)).